A 289-amino-acid chain; its full sequence is MPKASHQDLRFAFRELLASGSCFHTASVFDPMSARIAADLGFEVGILGGSVASLQVLAAPDFALITLSEFVEQATRIGRVAQLPVLADADHGYGNALNVMRTVIELERAGVAALTIEDTLLPAQFGRKSTDLIPVEEGVGKIRAALEARVDSSLSIIARTNAGVLSTEEIIVRTQSYQKAGADGICMVGVKDFEQLEQIAEHLTVPLMLVTYGNPNLRDDERLARLGVRIVVDGHAAYFAAIKATYDCLRLQRGRQNKSENLSATELSHTYTQPEDYIRWAKEYMSVEE.

A substrate-binding site is contributed by S50. Mg(2+) is bound at residue D88. Substrate-binding residues include R159 and H235.

The protein belongs to the isocitrate lyase/PEP mutase superfamily. Oxaloacetate decarboxylase family. Homotetramer; dimer of dimers. Mg(2+) serves as cofactor.

The catalysed reaction is oxaloacetate + H(+) = pyruvate + CO2. Its function is as follows. Catalyzes the decarboxylation of oxaloacetate into pyruvate. Seems to play a role in maintaining cellular concentrations of bicarbonate and pyruvate. The polypeptide is Oxaloacetate decarboxylase (Pseudomonas putida (strain ATCC 47054 / DSM 6125 / CFBP 8728 / NCIMB 11950 / KT2440)).